Reading from the N-terminus, the 502-residue chain is NAD(P)H-quinone oxidoreductase chain 4, chloroplastic (502 aa).

A run of 14 helical transmembrane segments spans residues 4–24 (FPWLTIIVGLPIFAGTLIFFF), 37–57 (ICICILELLITAYVFCYHFQL), 87–107 (VGPILLTGFITTLATLAAWPV), 113–130 (LFHFLMLAMYSGQIGLFS), 134–154 (LLLFFIMWEFELIPVYLLLSM), 167–187 (FILYTAGGSIFLLMGVLGMGL), 208–228 (ALEILFYFGFLIGYAVKLPII), 242–262 (HYSTCMLLAGILLKMGAYGLV), 272–292 (AHSIFSPWLIIVGAIQIIYAA), 305–325 (IAYSSVSHMGFIIIGICSITD), 330–350 (GAILQMISHGFIGAALFFLAG), 374–396 (IFTMFSSFSMASLALPGMSGFAA), 416–436 (ILITFVTAIGMILTPIYSLSM), and 464–484 (LFVSICIFLPVIGIGIYPDFV).

It belongs to the complex I subunit 4 family.

The protein localises to the plastid. The protein resides in the chloroplast thylakoid membrane. The catalysed reaction is a plastoquinone + NADH + (n+1) H(+)(in) = a plastoquinol + NAD(+) + n H(+)(out). The enzyme catalyses a plastoquinone + NADPH + (n+1) H(+)(in) = a plastoquinol + NADP(+) + n H(+)(out). The sequence is that of NAD(P)H-quinone oxidoreductase chain 4, chloroplastic from Ranunculus macranthus (Large buttercup).